We begin with the raw amino-acid sequence, 223 residues long: uncharacterized protein (223 aa).

Residues Glu11–Lys71 enclose the HTH tetR-type domain. Residues Ser34 to Phe53 constitute a DNA-binding region (H-T-H motif).

This is an uncharacterized protein from Bacillus subtilis (strain 168).